The following is a 138-amino-acid chain: uncharacterized protein (138 aa).

The N-terminal stretch at Met1–Gly35 is a signal peptide.

Isoform 1 is highly expressed in small intestine, testis and kidney, medium expressed in brain and heart and low expressed in colon; it could not be detected in liver, adrenal gland and pancreas.

The protein localises to the secreted. This is an uncharacterized protein from Homo sapiens (Human).